We begin with the raw amino-acid sequence, 374 residues long: Beta sliding clamp (374 aa).

This sequence belongs to the beta sliding clamp family. As to quaternary structure, forms a ring-shaped head-to-tail homodimer around DNA which binds and tethers DNA polymerases and other proteins to the DNA. The DNA replisome complex has a single clamp-loading complex (3 tau and 1 each of delta, delta', psi and chi subunits) which binds 3 Pol III cores (1 core on the leading strand and 2 on the lagging strand) each with a beta sliding clamp dimer. Additional proteins in the replisome are other copies of gamma, psi and chi, Ssb, DNA helicase and RNA primase.

It localises to the cytoplasm. Confers DNA tethering and processivity to DNA polymerases and other proteins. Acts as a clamp, forming a ring around DNA (a reaction catalyzed by the clamp-loading complex) which diffuses in an ATP-independent manner freely and bidirectionally along dsDNA. Initially characterized for its ability to contact the catalytic subunit of DNA polymerase III (Pol III), a complex, multichain enzyme responsible for most of the replicative synthesis in bacteria; Pol III exhibits 3'-5' exonuclease proofreading activity. The beta chain is required for initiation of replication as well as for processivity of DNA replication. The sequence is that of Beta sliding clamp (dnaN) from Helicobacter pylori (strain J99 / ATCC 700824) (Campylobacter pylori J99).